Here is a 361-residue protein sequence, read N- to C-terminus: MSIDQRLQLITRNAAEIITIDELRKKLESEEKLKGYIGFEPSGLFHIGWLIWTQKVKDLVEAGVNMTLLRATWHAWINDKLGGDLSLIKMAADYTVEVIKNYGVDTTKLNIVDADDMVKEKDYWALVIKVAKNSSLARIKRALTIMGRRAEEAEIDASKLIYPAMQVSDIFYLDLDIALGGTDQRKAHMLARDVAEKMGKKKIVSIHTPLLVGLQGGQRMSITEGMEEDDIQAEIKMSKSKPESAIFVSDSREDVERKIMGAYCPKGVAENNPILQILKYIIFPRYNFVKIERDIRYGGDVEFKDYEELERAYIEGKIHPMDLKKATARRLNEILEPIRKSLERKPEFEEMIQKISKSVTR.

Positions 36, 162, 166, 169, and 184 each coordinate L-tyrosine. A 'KMSKS' region motif is present at residues 236–240; the sequence is KMSKS. Lys239 is an ATP binding site.

The protein belongs to the class-I aminoacyl-tRNA synthetase family. TyrS type 4 subfamily. In terms of assembly, homodimer.

The protein localises to the cytoplasm. The catalysed reaction is tRNA(Tyr) + L-tyrosine + ATP = L-tyrosyl-tRNA(Tyr) + AMP + diphosphate + H(+). In terms of biological role, catalyzes the attachment of tyrosine to tRNA(Tyr) in a two-step reaction: tyrosine is first activated by ATP to form Tyr-AMP and then transferred to the acceptor end of tRNA(Tyr). This Saccharolobus islandicus (strain M.14.25 / Kamchatka #1) (Sulfolobus islandicus) protein is Tyrosine--tRNA ligase.